We begin with the raw amino-acid sequence, 206 residues long: Large ribosomal subunit protein uL4 (206 aa).

The tract at residues 45–76 (RQGNQSAKTRAEVSGGGKKPWRQKGTGRARQG) is disordered.

The protein belongs to the universal ribosomal protein uL4 family. In terms of assembly, part of the 50S ribosomal subunit.

In terms of biological role, one of the primary rRNA binding proteins, this protein initially binds near the 5'-end of the 23S rRNA. It is important during the early stages of 50S assembly. It makes multiple contacts with different domains of the 23S rRNA in the assembled 50S subunit and ribosome. Its function is as follows. Forms part of the polypeptide exit tunnel. The sequence is that of Large ribosomal subunit protein uL4 from Clostridium novyi (strain NT).